We begin with the raw amino-acid sequence, 245 residues long: Adenylate kinase (245 aa).

15–20 lines the ATP pocket; the sequence is GSGKGT. Residues 35 to 64 are NMP; that stretch reads SSGDLLRGAVSKDTPLSQEIKSYLDQGKLL. Residues S36, R41, 62–64, 103–106, and Q110 each bind AMP; these read KLL and GFPR. The LID stretch occupies residues 143-176; that stretch reads SRYICPACQGIYNEQQGFSSCPKCSVELIRRSDD. R144 contributes to the ATP binding site. Zn(2+) is bound by residues C147 and C150. 153-154 provides a ligand contact to ATP; the sequence is IY. 2 residues coordinate Zn(2+): C163 and C166. Residues R173 and R184 each contribute to the AMP site. A212 is a binding site for ATP.

Belongs to the adenylate kinase family. In terms of assembly, monomer.

It localises to the cytoplasm. The enzyme catalyses AMP + ATP = 2 ADP. The protein operates within purine metabolism; AMP biosynthesis via salvage pathway; AMP from ADP: step 1/1. In terms of biological role, catalyzes the reversible transfer of the terminal phosphate group between ATP and AMP. Plays an important role in cellular energy homeostasis and in adenine nucleotide metabolism. In Chlamydia trachomatis serovar L2 (strain ATCC VR-902B / DSM 19102 / 434/Bu), this protein is Adenylate kinase.